Reading from the N-terminus, the 536-residue chain is Inactive phospholipase D5 (536 aa).

A helical membrane pass occupies residues 69-89 (IVIFALVCCFAILVALIFSAV). The N-linked (GlcNAc...) asparagine glycan is linked to Asn121. Residues 215 to 242 (NKGRLQSSFWIVDKQHVYIGSAGLDWQS) form the PLD phosphodiesterase 1 domain. N-linked (GlcNAc...) asparagine glycosylation occurs at Asn302. Positions 434–460 (FPRLNRNKYMVTDGAAYIGNFDWVGND) constitute a PLD phosphodiesterase 2 domain.

Belongs to the phospholipase D family.

Its subcellular location is the membrane. This is Inactive phospholipase D5 (PLD5) from Homo sapiens (Human).